A 319-amino-acid polypeptide reads, in one-letter code: N-acyl-aromatic-L-amino acid amidohydrolase (carboxylate-forming) (319 aa).

The segment at 1-210 is hydrolytic domain; sequence MCSLPGSRKP…SILDFIELFN (210 aa). 2 residues coordinate Zn(2+): His21 and Glu24. Substrate-binding positions include Arg63 and 70-71; that span reads NR. His116 is a Zn(2+) binding site. The substrate site is built by Glu178 and Tyr288. Residues 211 to 318 form a shielding domain region; sequence QGMEFPAFEM…PGLTPSSTQT (108 aa). Phosphothreonine is present on Thr318.

The protein belongs to the AspA/AstE family. Aspartoacylase subfamily. Exists as a mixture of homodimers and homotetramer, both catalytically active. The cofactor is Zn(2+).

It localises to the apical cell membrane. Its subcellular location is the cytoplasm. It catalyses the reaction an N-acyl-aromatic L-alpha-amino acid + H2O = an aromatic L-alpha-amino acid + a carboxylate. The enzyme catalyses an N-acetyl-L-cysteine-S-conjugate + H2O = an S-substituted L-cysteine + acetate. In terms of biological role, plays an important role in deacetylating mercapturic acids in kidney proximal tubules. Also acts on N-acetyl-aromatic amino acids. The sequence is that of N-acyl-aromatic-L-amino acid amidohydrolase (carboxylate-forming) (Acy3) from Rattus norvegicus (Rat).